The sequence spans 118 residues: V-type proton ATPase subunit G 2 (118 aa).

The disordered stretch occupies residues Arg-26–Arg-90. Residues Gln-35–Phe-55 are compositionally biased toward basic and acidic residues. Polar residues-rich tracts occupy residues Gln-56–Leu-69 and Arg-78–Gln-89.

It belongs to the V-ATPase G subunit family. In terms of assembly, V-ATPase is a heteromultimeric enzyme made up of two complexes: the ATP-hydrolytic V1 complex and the proton translocation V0 complex. The V1 complex consists of three catalytic AB heterodimers that form a heterohexamer, three peripheral stalks each consisting of EG heterodimers, one central rotor including subunits D and F, and the regulatory subunits C and H. The proton translocation complex V0 consists of the proton transport subunit a, a ring of proteolipid subunits c9c'', rotary subunit d, subunits e and f, and the accessory subunits ATP6AP1/Ac45 and ATP6AP2/PRR.

The protein resides in the melanosome. It localises to the cytoplasmic vesicle. It is found in the clathrin-coated vesicle membrane. Its function is as follows. Subunit of the V1 complex of vacuolar(H+)-ATPase (V-ATPase), a multisubunit enzyme composed of a peripheral complex (V1) that hydrolyzes ATP and a membrane integral complex (V0) that translocates protons. V-ATPase is responsible for acidifying and maintaining the pH of intracellular compartments and in some cell types, is targeted to the plasma membrane, where it is responsible for acidifying the extracellular environment. This chain is V-type proton ATPase subunit G 2 (ATP6V1G2), found in Sus scrofa (Pig).